We begin with the raw amino-acid sequence, 200 residues long: MAIEFVATSKLPTKFGDFNISVFQDPVTGEEHVALSKGLEIAPTGPVLVRIHSECLTGDAFASLKCDCGPQLQATQKLINDVGQGVILYLRQEGRGIGLTNKIRAYALQDQGHDTVDANLLLNLPADARRYDMCSIMLDHLQVKQVKLITNNPLKLKALTDLGINVIDRVPLTVGKNPFNEQYLKTKKERMAHLYQKDDF.

50-54 is a GTP binding site; the sequence is RIHSE. Zn(2+) is bound by residues C55, C66, and C68. Residues Q71, 93-95, and T115 each bind GTP; that span reads EGR. D127 (proton acceptor) is an active-site residue. Catalysis depends on R129, which acts as the Nucleophile. Residues T150 and K155 each contribute to the GTP site.

This sequence belongs to the GTP cyclohydrolase II family. The cofactor is Zn(2+).

It catalyses the reaction GTP + 4 H2O = 2,5-diamino-6-hydroxy-4-(5-phosphoribosylamino)-pyrimidine + formate + 2 phosphate + 3 H(+). The protein operates within cofactor biosynthesis; riboflavin biosynthesis; 5-amino-6-(D-ribitylamino)uracil from GTP: step 1/4. In terms of biological role, catalyzes the conversion of GTP to 2,5-diamino-6-ribosylamino-4(3H)-pyrimidinone 5'-phosphate (DARP), formate and pyrophosphate. The protein is GTP cyclohydrolase-2 of Acinetobacter baylyi (strain ATCC 33305 / BD413 / ADP1).